Consider the following 536-residue polypeptide: Heparanase (536 aa).

The first 28 residues, 1–28, serve as a signal peptide directing secretion; the sequence is MLRPLLLLWLWGRLGALTQGTPAGTAPT. Heparan sulfate group contacts are provided by residues 55–57 and Thr-90; that span reads DAS. Positions 103-150 are cleaved as a propeptide — linker peptide; that stretch reads PTSEERSYWQSQDNNDICGSERVSADVLRKLQMEWPFQELLLLREQYQ. Residues Cys-120 and Cys-172 are joined by a disulfide bond. 151–155 contacts heparan sulfate group; that stretch reads REFKN. N-linked (GlcNAc...) asparagine glycans are attached at residues Asn-155, Asn-193, and Asn-210. Residue Glu-218 is the Proton donor of the active site. Heparan sulfate group is bound by residues 263 to 273, His-289, and Arg-296; that span reads QPRGKTVKLLR. The segment at 281 to 410 is required for heterodimerization with the heparanase 8 kDa subunit; sequence EVIDSLTWHH…LLFKKLVGPK (130 aa). The Nucleophile role is filled by Glu-336. Residues 341 to 343 and 382 to 384 contribute to the heparan sulfate group site; these read YGG and GNY. Cys-430 and Cys-535 are oxidised to a cystine. The N-linked (GlcNAc...) asparagine glycan is linked to Asn-452. A required for transferring proheparanase to the Golgi apparatus, secretion and subsequent enzyme activity and for enhancement of PKB/AKT1 phosphorylation region spans residues 520–536; sequence FSYGFFVIRNAKIAACI.

This sequence belongs to the glycosyl hydrolase 79 family. Heterodimer; heterodimer formation between the 8 kDa and the 50 kDa subunits is required for enzyme activity. Interacts with TF; the interaction, inhibited by heparin, enhances the generation of activated factor X and activates coagulation. Interacts with HRG; the interaction is enhanced at acidic pH, partially inhibits binding of HPSE to cell surface receptors and modulates its enzymatic activity. Interacts with SDC1; the interaction enhances the shedding of SDC1. Interacts with HPSE2. Proteolytically processed. The cleavage of the 65 kDa form leads to the generation of a linker peptide, and the 8 kDa and 50 kDa products. The active form, the 8/50 kDa heterodimer, is resistant to degradation. Complete removal of the linker peptide appears to be a prerequisite to the complete activation of the enzyme. In terms of processing, N-glycosylated. Glycosylation of the 50 kDa subunit appears to be essential for its solubility.

It is found in the lysosome membrane. The protein resides in the secreted. Its subcellular location is the nucleus. The enzyme catalyses endohydrolysis of (1-&gt;4)-beta-D-glycosidic bonds of heparan sulfate chains in heparan sulfate proteoglycan.. With respect to regulation, inhibited by laminarin sulfate and, to a lower extent, by heparin and sulfamin. Activated by calcium and magnesium. Inhibited by EDTA. Endoglycosidase that cleaves heparan sulfate proteoglycans (HSPGs) into heparan sulfate side chains and core proteoglycans. Participates in extracellular matrix (ECM) degradation and remodeling. Selectively cleaves the linkage between a glucuronic acid unit and an N-sulfo glucosamine unit carrying either a 3-O-sulfo or a 6-O-sulfo group. Can also cleave the linkage between a glucuronic acid unit and an N-sulfo glucosamine unit carrying a 2-O-sulfo group, but not linkages between a glucuronic acid unit and a 2-O-sulfated iduronic acid moiety. It is essentially inactive at neutral pH but becomes active under acidic conditions such as during tumor invasion and in inflammatory processes. Facilitates cell migration associated with metastasis, wound healing and inflammation. Enhances shedding of syndecans, and increases endothelial invasion and angiogenesis in myelomas. Acts as a procoagulant by increasing the generation of activation factor X in the presence of tissue factor and activation factor VII. Increases cell adhesion to the extracellular matrix (ECM), independent of its enzymatic activity. Induces AKT1/PKB phosphorylation via lipid rafts increasing cell mobility and invasion. Heparin increases this AKT1/PKB activation. Regulates osteogenesis. Enhances angiogenesis through up-regulation of SRC-mediated activation of VEGF. Implicated in hair follicle inner root sheath differentiation and hair homeostasis. This chain is Heparanase (Hpse), found in Rattus norvegicus (Rat).